The primary structure comprises 135 residues: Mediator of RNA polymerase II transcription subunit 10 (135 aa).

The protein belongs to the Mediator complex subunit 10 family. In terms of assembly, component of the Mediator complex.

It is found in the nucleus. Component of the Mediator complex, a coactivator involved in the regulated transcription of nearly all RNA polymerase II-dependent genes. Mediator functions as a bridge to convey information from gene-specific regulatory proteins to the basal RNA polymerase II transcription machinery. Mediator is recruited to promoters by direct interactions with regulatory proteins and serves as a scaffold for the assembly of a functional preinitiation complex with RNA polymerase II and the general transcription factors. In Xenopus tropicalis (Western clawed frog), this protein is Mediator of RNA polymerase II transcription subunit 10 (med10).